A 331-amino-acid chain; its full sequence is Cytosolic sulfotransferase 8 (331 aa).

Over residues methionine 1–lysine 11 the composition is skewed to basic and acidic residues. The tract at residues methionine 1–serine 31 is disordered. Over residues glutamate 12 to serine 22 the composition is skewed to acidic residues. Lysine 80 to tryptophan 85 is a binding site for 3'-phosphoadenylyl sulfate. The active-site Proton acceptor is the histidine 145. Residues arginine 167, serine 175, tyrosine 231, and arginine 297–glycine 299 each bind 3'-phosphoadenylyl sulfate.

Belongs to the sulfotransferase 1 family. As to expression, expressed in seedlings and roots.

The protein localises to the cytoplasm. In terms of biological role, sulfotransferase that utilizes 3'-phospho-5'-adenylyl sulfate (PAPS) as sulfonate donor. No activity with brassinosteroids. The protein is Cytosolic sulfotransferase 8 (SOT8) of Arabidopsis thaliana (Mouse-ear cress).